The chain runs to 200 residues: Recombination protein RecR (200 aa).

The C4-type zinc-finger motif lies at 59-74 (CEKCNTFTEAQVCEVC). One can recognise a Toprim domain in the interval 82 to 177 (ALLCVVETPA…AVTRLARGVP (96 aa)).

Belongs to the RecR family.

May play a role in DNA repair. It seems to be involved in an RecBC-independent recombinational process of DNA repair. It may act with RecF and RecO. In Burkholderia pseudomallei (strain 1106a), this protein is Recombination protein RecR.